A 232-amino-acid polypeptide reads, in one-letter code: Phosphatidylserine decarboxylase proenzyme (232 aa).

The Schiff-base intermediate with substrate; via pyruvic acid role is filled by S190. A Pyruvic acid (Ser); by autocatalysis modification is found at S190.

Belongs to the phosphatidylserine decarboxylase family. PSD-A subfamily. As to quaternary structure, heterodimer of a large membrane-associated beta subunit and a small pyruvoyl-containing alpha subunit. Requires pyruvate as cofactor. Is synthesized initially as an inactive proenzyme. Formation of the active enzyme involves a self-maturation process in which the active site pyruvoyl group is generated from an internal serine residue via an autocatalytic post-translational modification. Two non-identical subunits are generated from the proenzyme in this reaction, and the pyruvate is formed at the N-terminus of the alpha chain, which is derived from the carboxyl end of the proenzyme. The post-translation cleavage follows an unusual pathway, termed non-hydrolytic serinolysis, in which the side chain hydroxyl group of the serine supplies its oxygen atom to form the C-terminus of the beta chain, while the remainder of the serine residue undergoes an oxidative deamination to produce ammonia and the pyruvoyl prosthetic group on the alpha chain.

Its subcellular location is the cell membrane. It catalyses the reaction a 1,2-diacyl-sn-glycero-3-phospho-L-serine + H(+) = a 1,2-diacyl-sn-glycero-3-phosphoethanolamine + CO2. The protein operates within phospholipid metabolism; phosphatidylethanolamine biosynthesis; phosphatidylethanolamine from CDP-diacylglycerol: step 2/2. Its function is as follows. Catalyzes the formation of phosphatidylethanolamine (PtdEtn) from phosphatidylserine (PtdSer). The protein is Phosphatidylserine decarboxylase proenzyme of Bradyrhizobium diazoefficiens (strain JCM 10833 / BCRC 13528 / IAM 13628 / NBRC 14792 / USDA 110).